We begin with the raw amino-acid sequence, 402 residues long: Putative cytochrome P450 123 (402 aa).

Residue cysteine 350 participates in heme binding.

It belongs to the cytochrome P450 family. The cofactor is heme.

This chain is Putative cytochrome P450 123 (cyp123), found in Mycobacterium bovis (strain ATCC BAA-935 / AF2122/97).